The chain runs to 423 residues: MKLLVIGNGGREHALAWKLAQSPKVETVFVAPGNAGTAIEPKLQNIDLTAHQDLIEFCRKENIVFTVVGPEAPLAAGVVDDFRAAGLKIFGPTQYAAQLESSKDFAKAFMAKYNIPTAQYQTFENADAAHDYVNQKGAPIVIKADGLAAGKGVIVAMTLDEAHAAIDDMLLDNKMGNAGARVVIEDFLQGEEASFIVMVDGNNVLPMATSQDHKRLLDGDKGLNTGGMGAYSPAPVVTPVVYERAMNEIILPTVAGMKAEGHEFTGFLYAGLMIDQSGAPHTIEFNCRFGDPETQPIMSRLNSDLSDLVEAAIDGKLDSVTAEWSPQTAVGVVLAAQNYPETPKKGDVISGLDAANQVGKVFHAGTTANEKGDVLTNGGRVLCVVGLGDNVAQAKAKAYGALEKISFDGMQYRKDIADKAINR.

The region spanning 107-314 (KAFMAKYNIP…LSDLVEAAID (208 aa)) is the ATP-grasp domain. 133–194 (VNQKGAPIVI…EDFLQGEEAS (62 aa)) contributes to the ATP binding site. Mg(2+) contacts are provided by E284 and N286.

It belongs to the GARS family. Mg(2+) serves as cofactor. Requires Mn(2+) as cofactor.

The catalysed reaction is 5-phospho-beta-D-ribosylamine + glycine + ATP = N(1)-(5-phospho-beta-D-ribosyl)glycinamide + ADP + phosphate + H(+). It participates in purine metabolism; IMP biosynthesis via de novo pathway; N(1)-(5-phospho-D-ribosyl)glycinamide from 5-phospho-alpha-D-ribose 1-diphosphate: step 2/2. This chain is Phosphoribosylamine--glycine ligase, found in Neisseria meningitidis serogroup A / serotype 4A (strain DSM 15465 / Z2491).